Here is a 148-residue protein sequence, read N- to C-terminus: Lysozyme C (148 aa).

An N-terminal signal peptide occupies residues 1 to 18 (MKALIILGLVLLSVTVQG). The 130-residue stretch at 19 to 148 (KIFERCELAR…VSQYVKGCGV (130 aa)) folds into the C-type lysozyme domain. Cystine bridges form between C24/C146, C48/C134, C83/C99, and C95/C113. Active-site residues include E53 and D71.

This sequence belongs to the glycosyl hydrolase 22 family. As to quaternary structure, monomer.

The protein resides in the secreted. The enzyme catalyses Hydrolysis of (1-&gt;4)-beta-linkages between N-acetylmuramic acid and N-acetyl-D-glucosamine residues in a peptidoglycan and between N-acetyl-D-glucosamine residues in chitodextrins.. Lysozymes have primarily a bacteriolytic function; those in tissues and body fluids are associated with the monocyte-macrophage system and enhance the activity of immunoagents. The chain is Lysozyme C (LYZ) from Nasalis larvatus (Proboscis monkey).